The primary structure comprises 432 residues: D-amino acid dehydrogenase (432 aa).

3-17 (VLVLGGGVIGVTSAY) provides a ligand contact to FAD.

Belongs to the DadA oxidoreductase family. FAD serves as cofactor.

The catalysed reaction is a D-alpha-amino acid + A + H2O = a 2-oxocarboxylate + AH2 + NH4(+). The protein operates within amino-acid degradation; D-alanine degradation; NH(3) and pyruvate from D-alanine: step 1/1. Functionally, oxidative deamination of D-amino acids. In Delftia acidovorans (strain DSM 14801 / SPH-1), this protein is D-amino acid dehydrogenase.